Reading from the N-terminus, the 204-residue chain is Methylthioribulose-1-phosphate dehydratase (204 aa).

The Zn(2+) site is built by histidine 94 and histidine 96.

Belongs to the aldolase class II family. MtnB subfamily. Zn(2+) is required as a cofactor.

The enzyme catalyses 5-(methylsulfanyl)-D-ribulose 1-phosphate = 5-methylsulfanyl-2,3-dioxopentyl phosphate + H2O. Its pathway is amino-acid biosynthesis; L-methionine biosynthesis via salvage pathway; L-methionine from S-methyl-5-thio-alpha-D-ribose 1-phosphate: step 2/6. Its function is as follows. Catalyzes the dehydration of methylthioribulose-1-phosphate (MTRu-1-P) into 2,3-diketo-5-methylthiopentyl-1-phosphate (DK-MTP-1-P). This is Methylthioribulose-1-phosphate dehydratase from Citrobacter koseri (strain ATCC BAA-895 / CDC 4225-83 / SGSC4696).